We begin with the raw amino-acid sequence, 404 residues long: Cysteine desulfurase IscS (404 aa).

Residues 75-76, N155, Q183, and 203-205 each bind pyridoxal 5'-phosphate; these read AT and SAH. At K206 the chain carries N6-(pyridoxal phosphate)lysine. Residue T243 coordinates pyridoxal 5'-phosphate. The active-site Cysteine persulfide intermediate is the C328. [2Fe-2S] cluster is bound at residue C328.

It belongs to the class-V pyridoxal-phosphate-dependent aminotransferase family. NifS/IscS subfamily. Homodimer. Forms a heterotetramer with IscU, interacts with other sulfur acceptors. Pyridoxal 5'-phosphate is required as a cofactor.

The protein resides in the cytoplasm. The enzyme catalyses (sulfur carrier)-H + L-cysteine = (sulfur carrier)-SH + L-alanine. The protein operates within cofactor biosynthesis; iron-sulfur cluster biosynthesis. In terms of biological role, master enzyme that delivers sulfur to a number of partners involved in Fe-S cluster assembly, tRNA modification or cofactor biosynthesis. Catalyzes the removal of elemental sulfur atoms from cysteine to produce alanine. Functions as a sulfur delivery protein for Fe-S cluster synthesis onto IscU, an Fe-S scaffold assembly protein, as well as other S acceptor proteins. The chain is Cysteine desulfurase IscS from Pseudomonas fluorescens (strain Pf0-1).